The following is a 461-amino-acid chain: Dihydrolipoyl dehydrogenase (461 aa).

FAD-binding positions include 34 to 42, Lys-51, and Gly-114; that span reads EEDQAGGTC. A disulfide bridge connects residues Cys-42 and Cys-47. NAD(+) is bound by residues 177 to 181, Glu-200, and 261 to 264; these read GGGVI and AIGR. FAD-binding residues include Asp-304 and Ala-312. His-436 serves as the catalytic Proton acceptor.

This sequence belongs to the class-I pyridine nucleotide-disulfide oxidoreductase family. Requires FAD as cofactor.

Its subcellular location is the cytoplasm. It catalyses the reaction N(6)-[(R)-dihydrolipoyl]-L-lysyl-[protein] + NAD(+) = N(6)-[(R)-lipoyl]-L-lysyl-[protein] + NADH + H(+). Functionally, the branched-chain alpha-keto dehydrogenase complex catalyzes the overall conversion of alpha-keto acids to acyl-CoA and CO(2). It contains multiple copies of 3 enzymatic components: branched-chain alpha-keto acid decarboxylase (E1), lipoamide acyltransferase (E2) and lipoamide dehydrogenase (E3). In Chlamydia pneumoniae (Chlamydophila pneumoniae), this protein is Dihydrolipoyl dehydrogenase (lpdA).